A 2523-amino-acid chain; its full sequence is Non-reducing polyketide synthase Preu3 (2523 aa).

The segment at 58-247 (LQSLASERRA…KILAMTGSFH (190 aa)) is N-terminal acylcarrier protein transacylase domain (SAT). In terms of domain architecture, Ketosynthase family 3 (KS3) spans 373–792 (DNAVAVVGMA…GSNGAMIVCQ (420 aa)). Residues Cys539, His674, and His715 each act as for beta-ketoacyl synthase activity in the active site. The malonyl-CoA:ACP transacylase (MAT) domain stretch occupies residues 900-1207 (CFGGQVKAFV…KAFGSLADAT (308 aa)). Ser986 (for acyl/malonyl transferase activity) is an active-site residue. The tract at residues 1271 to 1398 (HELLTFSSFE…GLVAFGGTVE (128 aa)) is N-terminal hotdog fold. The PKS/mFAS DH domain maps to 1271-1573 (HELLTFSSFE…FTRVTVPGLR (303 aa)). The product template (PT) domain stretch occupies residues 1301-1568 (LVKGHAVVAQ…ALGCRFTRVT (268 aa)). Catalysis depends on His1305, which acts as the Proton acceptor; for dehydratase activity. Positions 1421 to 1573 (ECDALRGSAT…FTRVTVPGLR (153 aa)) are C-terminal hotdog fold. Asp1483 (proton donor; for dehydratase activity) is an active-site residue. Residues 1579–1601 (ANGDARAQERPSGSRISPSPLAP) form a disordered region. Residues 1639-1713 (VDYLAQVKAL…KLAEYLAKTL (75 aa)) form the Carrier domain. Position 1673 is an O-(pantetheine 4'-phosphoryl)serine (Ser1673). The tract at residues 1735-1757 (DAEQSSDESPYDSTDDSASGYGD) is disordered. Residues 1738–1749 (QSSDESPYDSTD) show a composition bias toward acidic residues. Positions 1986–2085 (LEIGGGTGGT…MRQLLSSEGF (100 aa)) are methyltransferase (CMeT) domain. The segment at 2218-2520 (LILHGGGHVL…RALEWLVEQC (303 aa)) is thioesterase (TE) domain.

Pantetheine 4'-phosphate is required as a cofactor.

The catalysed reaction is 3 malonyl-CoA + acetyl-CoA + S-adenosyl-L-methionine + H(+) = 3-methylorsellinate + S-adenosyl-L-homocysteine + 3 CO2 + 4 CoA. In terms of biological role, non-reducing polyketide synthase; part of a gene cluster that mediates the biosynthesis of a yet unidentified natural product. The first step in the pathway is performed by Preu3 that condenses one acetyl-CoA starter unit with 3 malonyl-CoA units. Preu3 also catalyzes one methylation step to produce 3-methylorsellinate, an intermediate that exhibits significant antibacterial activities against methicillin-resistant Staphylococcus aureus, multidrug-resistant Enterococcus faecalis, multidrug-resistant Enterococcus faecium, and multidrug-resistant Staphylococcus epidermidis. The sequence is that of Non-reducing polyketide synthase Preu3 from Preussia isomera (Coprophilous fungus).